The chain runs to 1234 residues: ATP-dependent helicase/nuclease subunit A (1234 aa).

A UvrD-like helicase ATP-binding domain is found at 2-475 (TQFTTSQQAA…IILAENFRST (474 aa)). 23-30 (ASAGSGKT) is a binding site for ATP. One can recognise a UvrD-like helicase C-terminal domain in the interval 507 to 806 (YGALDYGDAH…KLMTIHKSKG (300 aa)).

Belongs to the helicase family. AddA subfamily. In terms of assembly, heterodimer of AddA and AddB/RexB. Requires Mg(2+) as cofactor.

The enzyme catalyses Couples ATP hydrolysis with the unwinding of duplex DNA by translocating in the 3'-5' direction.. It carries out the reaction ATP + H2O = ADP + phosphate + H(+). Functionally, the heterodimer acts as both an ATP-dependent DNA helicase and an ATP-dependent, dual-direction single-stranded exonuclease. Recognizes the chi site generating a DNA molecule suitable for the initiation of homologous recombination. The AddA nuclease domain is required for chi fragment generation; this subunit has the helicase and 3' -&gt; 5' nuclease activities. The chain is ATP-dependent helicase/nuclease subunit A from Lacticaseibacillus paracasei (strain ATCC 334 / BCRC 17002 / CCUG 31169 / CIP 107868 / KCTC 3260 / NRRL B-441) (Lactobacillus paracasei).